A 234-amino-acid polypeptide reads, in one-letter code: tRNA (guanine-N(1)-)-methyltransferase (234 aa).

S-adenosyl-L-methionine is bound by residues Gly110 and 134 to 139 (IGDYVL).

Belongs to the RNA methyltransferase TrmD family. In terms of assembly, homodimer.

It is found in the cytoplasm. It carries out the reaction guanosine(37) in tRNA + S-adenosyl-L-methionine = N(1)-methylguanosine(37) in tRNA + S-adenosyl-L-homocysteine + H(+). Its function is as follows. Specifically methylates guanosine-37 in various tRNAs. In Tropheryma whipplei (strain Twist) (Whipple's bacillus), this protein is tRNA (guanine-N(1)-)-methyltransferase.